The sequence spans 527 residues: MLDGFVPWPDHLADEYRRRGIWLGRPLGDLLHDSCRRHADRVAVVCDGHRMTYAELSRRADRLAGGLIGLGIRPLDRVVVHLPNIPEFVVLVFALLRAGAIPVLALPGHRKSEISHLCAHSGAVAYAVKDEFGGFDYRELAREIPPVRHVLVSGDAQEFTALESVGGDDVPLPRVDPSDPALFLLSGGTTGLPKLIPRAHDDYAYVMRATAEAMHVGEEVAYLAVNPVAHQAALACPGVFGSLLLGGKAVLTSSVRPDEVFPLIRREHVTVTTVVPSVLRLWADSGQRPDLSHLLVQVGSAPLDPALARRAGEVLGCRIMRWYGISEGLLTHTRFDDPEDVIMGTDGRPMSRDDEVRIVDESLNPVPEGEAGEMIARGPYTIRGYYRAPEENTRSFTPDGFFRTGDLVRRSPEGDITIVGRIKDVINRAGEKVSAEEVERQLRTHPSVQDAAVVGVPDTVLGERTYAFLVLTGAQIRTSAVKEFLRGCGLATYKIPDRIVPLDQLPRTPMGKVDKKTLRALAVSSAR.

Residue 187-188 (GG) participates in ATP binding. 230–231 (HQ) provides a ligand contact to substrate. ATP is bound by residues 300–302 (SAP), aspartate 406, arginine 421, and lysine 512. Substrate is bound at residue lysine 512.

Belongs to the ATP-dependent AMP-binding enzyme family. As to quaternary structure, monomer.

Functionally, involved in triostin biosynthesis. Activates quinoxaline-2-carboxylic acid (QA) via catalysis of the ATP-pyrophosphate exchange reaction dependent on QA, and the formation of the corresponding adenylate. Also activates structural analogs of QA such as quinoline-2-carboxylic acid and thieno[3,2-b]pyridine-5-carboxylic acid, but not quinoline-3-carboxylic acid, quinoline-4-carboxylic acid, pyridine-2-carboxylic acid or 2-pyrazinecarboxylic acid. The protein is Triostin synthetase I (trsA) of Streptomyces triostinicus.